We begin with the raw amino-acid sequence, 447 residues long: DNA primase DnaG (447 aa).

Positions 200-274 (DSIIVVEGRA…DIDYVARAPE (75 aa)) constitute a Toprim domain. 3 residues coordinate Mg(2+): Glu-206, Asp-248, and Asp-250.

The protein belongs to the archaeal DnaG primase family. In terms of assembly, forms a ternary complex with MCM helicase and DNA. Component of the archaeal exosome complex. Mg(2+) is required as a cofactor.

It carries out the reaction ssDNA + n NTP = ssDNA/pppN(pN)n-1 hybrid + (n-1) diphosphate.. Functionally, RNA polymerase that catalyzes the synthesis of short RNA molecules used as primers for DNA polymerase during DNA replication. Also part of the exosome, which is a complex involved in RNA degradation. Acts as a poly(A)-binding protein that enhances the interaction between heteromeric, adenine-rich transcripts and the exosome. The chain is DNA primase DnaG from Pyrococcus abyssi (strain GE5 / Orsay).